A 429-amino-acid chain; its full sequence is Glutamyl-tRNA reductase (429 aa).

Substrate-binding positions include 49-52 (TCNR), Ser-108, 113-115 (EAQ), and Gln-119. The Nucleophile role is filled by Cys-50. Residue 188–193 (GAGEMS) coordinates NADP(+).

Belongs to the glutamyl-tRNA reductase family. Homodimer.

The catalysed reaction is (S)-4-amino-5-oxopentanoate + tRNA(Glu) + NADP(+) = L-glutamyl-tRNA(Glu) + NADPH + H(+). It functions in the pathway porphyrin-containing compound metabolism; protoporphyrin-IX biosynthesis; 5-aminolevulinate from L-glutamyl-tRNA(Glu): step 1/2. Functionally, catalyzes the NADPH-dependent reduction of glutamyl-tRNA(Glu) to glutamate 1-semialdehyde (GSA). The polypeptide is Glutamyl-tRNA reductase (Rubrobacter xylanophilus (strain DSM 9941 / JCM 11954 / NBRC 16129 / PRD-1)).